Consider the following 312-residue polypeptide: L-lactate dehydrogenase (312 aa).

Residues V11, D32, R37, and 76–77 contribute to the NAD(+) site; that span reads GA. Substrate-binding positions include Q79, R85, and 117-120; that span reads NPVD. Residues 115-117 and T140 contribute to the NAD(+) site; that span reads VSN. Substrate is bound at residue 145 to 148; the sequence is DTAR. R150 and H165 together coordinate beta-D-fructose 1,6-bisphosphate. The Proton acceptor role is filled by H172. A Phosphotyrosine modification is found at Y217. T226 is a binding site for substrate.

This sequence belongs to the LDH/MDH superfamily. LDH family. As to quaternary structure, homotetramer.

It is found in the cytoplasm. It catalyses the reaction (S)-lactate + NAD(+) = pyruvate + NADH + H(+). The protein operates within fermentation; pyruvate fermentation to lactate; (S)-lactate from pyruvate: step 1/1. Its activity is regulated as follows. Allosterically activated by fructose 1,6-bisphosphate (FBP). In terms of biological role, catalyzes the conversion of lactate to pyruvate. This Pseudothermotoga lettingae (strain ATCC BAA-301 / DSM 14385 / NBRC 107922 / TMO) (Thermotoga lettingae) protein is L-lactate dehydrogenase.